We begin with the raw amino-acid sequence, 225 residues long: MGRGKVELKRIENKISRQVTFAKRRNGLLKKAYELSVLCDAEVALIIFSTRGRLFEFSTSSCMYKTLERYRSCNYNLNSCEASAALETELSNYQEYLKLKTRVEFLQTTQRNLLGEDLVPLSLKELEQLENQIEISLMNIRSSKNQQLLDQVFELKRKEQQLQDANKDLKRKIQETSGENMLHISCQDVGPSGHASEANQEFLHHAICDPSLHIGYQAYMDHLNQ.

In terms of domain architecture, MADS-box spans 1–61 (MGRGKVELKR…GRLFEFSTSS (61 aa)). The region spanning 89–179 (ELSNYQEYLK…KRKIQETSGE (91 aa)) is the K-box domain.

May interact with the K-box of MADS6.

The protein localises to the nucleus. Its function is as follows. Probable transcription factor. The sequence is that of MADS-box transcription factor 5 (MADS5) from Oryza sativa subsp. indica (Rice).